An 87-amino-acid chain; its full sequence is Small ribosomal subunit protein uS15 (87 aa).

It belongs to the universal ribosomal protein uS15 family. As to quaternary structure, part of the 30S ribosomal subunit. Forms a bridge to the 50S subunit in the 70S ribosome, contacting the 23S rRNA.

One of the primary rRNA binding proteins, it binds directly to 16S rRNA where it helps nucleate assembly of the platform of the 30S subunit by binding and bridging several RNA helices of the 16S rRNA. In terms of biological role, forms an intersubunit bridge (bridge B4) with the 23S rRNA of the 50S subunit in the ribosome. The chain is Small ribosomal subunit protein uS15 from Pseudothermotoga lettingae (strain ATCC BAA-301 / DSM 14385 / NBRC 107922 / TMO) (Thermotoga lettingae).